We begin with the raw amino-acid sequence, 211 residues long: Molybdenum cofactor guanylyltransferase (211 aa).

Residues 12 to 14 (LAG), Lys25, Asn55, Asp73, and Asp103 each bind GTP. Asp103 is a binding site for Mg(2+).

It belongs to the MobA family. As to quaternary structure, monomer. Mg(2+) is required as a cofactor.

The protein localises to the cytoplasm. It catalyses the reaction Mo-molybdopterin + GTP + H(+) = Mo-molybdopterin guanine dinucleotide + diphosphate. Transfers a GMP moiety from GTP to Mo-molybdopterin (Mo-MPT) cofactor (Moco or molybdenum cofactor) to form Mo-molybdopterin guanine dinucleotide (Mo-MGD) cofactor. This is Molybdenum cofactor guanylyltransferase from Albidiferax ferrireducens (strain ATCC BAA-621 / DSM 15236 / T118) (Rhodoferax ferrireducens).